A 145-amino-acid chain; its full sequence is Superoxide dismutase [Mn/Fe] (145 aa).

Fe(3+) contacts are provided by His10 and His64. 2 residues coordinate Mn(2+): His10 and His64.

Belongs to the iron/manganese superoxide dismutase family. Mn(2+) serves as cofactor. The cofactor is Fe(3+).

It catalyses the reaction 2 superoxide + 2 H(+) = H2O2 + O2. Functionally, destroys superoxide anion radicals which are normally produced within the cells and which are toxic to biological systems. Catalyzes the dismutation of superoxide anion radicals into O2 and H2O2 by successive reduction and oxidation of the transition metal ion at the active site. The polypeptide is Superoxide dismutase [Mn/Fe] (sodA) (Streptococcus parasanguinis).